An 835-amino-acid chain; its full sequence is Beta-galactosidase (835 aa).

Positions 1 to 22 (MGFWMAMLLMLLLCLWVSCGIA) are cleaved as a signal peptide. Glu180 functions as the Proton donor in the catalytic mechanism. The active-site Nucleophile is the Glu249. The SUEL-type lectin domain occupies 749–835 (RPLRPKAHLK…KKLSVEAICS (87 aa)).

Belongs to the glycosyl hydrolase 35 family.

The enzyme catalyses Hydrolysis of terminal non-reducing beta-D-galactose residues in beta-D-galactosides.. Its function is as follows. Involved in cell wall degradation. Degrades polysaccharides containing beta-(1--&gt;4)-linked galactans, acting as an exo-(1--&gt;4)-beta-D-galactanase. This chain is Beta-galactosidase, found in Solanum lycopersicum (Tomato).